Reading from the N-terminus, the 474-residue chain is Homeobox protein PKNOX2 (474 aa).

The disordered stretch occupies residues 1–42 (MMQHASPAPALTMMATQNVPPPPYQDSPQMTATAQPPSKAQA). Over residues 26 to 38 (DSPQMTATAQPPS) the composition is skewed to polar residues. In terms of domain architecture, MEIS N-terminal spans 96–179 (GSECITSASF…MHSDNLLRND (84 aa)). A DNA-binding region (homeobox) is located at residues 291–350 (KRGVLPKHATNIMRSWLFQHLMHPYPTEDEKRQIAAQTNLTLLQVNNWFINARRRILQPM). 3 disordered regions span residues 351-371 (LDAS…QHRP), 385-405 (LQQQ…LDNL), and 423-474 (AAHD…DSLE). The span at 361-371 (KAKKIKSQHRP) shows a compositional bias: basic residues. The segment covering 429-456 (LDGTEEEDEDDMEEEEEEEEELEEEADE) has biased composition (acidic residues).

The protein belongs to the TALE/MEIS homeobox family.

The protein localises to the nucleus. This is Homeobox protein PKNOX2 (Pknox2) from Mus musculus (Mouse).